The chain runs to 305 residues: MERSRVTREAPTGTRILLASLSAMVAESVTFPIDLTKTRMQLHGSGSASGAHRIGAFGVVSEIARKEGVIGLYKGLSPAIIRHLFYTPIRIIGYENLKGLIVRSETNNSESLPLATKALVGGFSGVIAQVVASPADLVKVRMQADGRLVSQGLKPRYSGPIEAFTKILQSEGVKGLWKGVLPNIQRAFLVNMGELACYDHAKHFVIDKKIAEDNIFAHTLASIMSGLASTSLSCPADVVKTRMMNQGENAVYRNSYDCLVKTVKFEGIRALWKGFFPTWARLGPWQFVFWVSYEKFRLLAGISSF.

Solcar repeat units lie at residues 14–100, 112–204, and 213–299; these read TRIL…LKGL, LPLA…AKHF, and DNIF…FRLL. Helical transmembrane passes span 16 to 36, 69 to 89, 118 to 138, 178 to 198, 219 to 239, and 272 to 292; these read ILLA…IDLT, VIGL…YTPI, ALVG…ADLV, KGVL…LACY, TLAS…ADVV, and WKGF…FWVS.

The protein belongs to the mitochondrial carrier (TC 2.A.29) family.

The protein localises to the mitochondrion inner membrane. PUMPS are mitochondrial transporter proteins that create proton leaks across the inner mitochondrial membrane, thus uncoupling oxidative phosphorylation. This leads to a decrease in the efficiency of oxidative phosphorylation and an increase in heat production. May be involved in protecting plant cells against oxidative stress damage. This chain is Mitochondrial uncoupling protein 3 (PUMP3), found in Arabidopsis thaliana (Mouse-ear cress).